A 155-amino-acid polypeptide reads, in one-letter code: Transcription antitermination protein NusB (155 aa).

Belongs to the NusB family.

Functionally, involved in transcription antitermination. Required for transcription of ribosomal RNA (rRNA) genes. Binds specifically to the boxA antiterminator sequence of the ribosomal RNA (rrn) operons. This chain is Transcription antitermination protein NusB, found in Vibrio campbellii (strain ATCC BAA-1116).